Reading from the N-terminus, the 153-residue chain is Cytochrome c-type biogenesis protein CcmE (153 aa).

At 1–7 (MKPRHKR) the chain is on the cytoplasmic side. A helical; Signal-anchor for type II membrane protein membrane pass occupies residues 8-28 (LAIAGGVLVAVGAIATLVLNA). At 29-153 (FQSNLVFFYS…SSQAATGDPR (125 aa)) the chain is on the periplasmic side. Positions 120 and 124 each coordinate heme. Residues 130-153 (AEALKRAKEGGQMQSSQAATGDPR) form a disordered region. A compositionally biased stretch (polar residues) spans 141–153 (QMQSSQAATGDPR).

Belongs to the CcmE/CycJ family.

The protein resides in the cell inner membrane. Heme chaperone required for the biogenesis of c-type cytochromes. Transiently binds heme delivered by CcmC and transfers the heme to apo-cytochromes in a process facilitated by CcmF and CcmH. This chain is Cytochrome c-type biogenesis protein CcmE, found in Leptothrix cholodnii (strain ATCC 51168 / LMG 8142 / SP-6) (Leptothrix discophora (strain SP-6)).